A 344-amino-acid chain; its full sequence is Small ribosomal subunit biogenesis GTPase RsgA (344 aa).

The CP-type G domain maps to 100–268 (KNELSRPDYY…LIDSPGIREF (169 aa)). Residues 156 to 159 (NKID) and 210 to 218 (GQSGVGKSS) contribute to the GTP site. Residues C292, C297, H299, and C305 each coordinate Zn(2+).

This sequence belongs to the TRAFAC class YlqF/YawG GTPase family. RsgA subfamily. As to quaternary structure, monomer. Associates with 30S ribosomal subunit, binds 16S rRNA. Zn(2+) serves as cofactor.

The protein resides in the cytoplasm. Its function is as follows. One of several proteins that assist in the late maturation steps of the functional core of the 30S ribosomal subunit. Helps release RbfA from mature subunits. May play a role in the assembly of ribosomal proteins into the subunit. Circularly permuted GTPase that catalyzes slow GTP hydrolysis, GTPase activity is stimulated by the 30S ribosomal subunit. This Actinobacillus pleuropneumoniae serotype 5b (strain L20) protein is Small ribosomal subunit biogenesis GTPase RsgA.